The chain runs to 97 residues: HssA/B-like protein 38 (97 aa).

The disordered stretch occupies residues Met-1–Ser-29.

It belongs to the hssA/B family.

The sequence is that of HssA/B-like protein 38 (hssl38) from Dictyostelium discoideum (Social amoeba).